Reading from the N-terminus, the 284-residue chain is D-tagatose-1,6-bisphosphate aldolase subunit GatY (284 aa).

Catalysis depends on D82, which acts as the Proton donor. Positions 83 and 180 each coordinate Zn(2+). A dihydroxyacetone phosphate-binding site is contributed by G181. H208 is a Zn(2+) binding site. Dihydroxyacetone phosphate is bound by residues 209 to 211 (GAS) and 230 to 233 (NVAT).

This sequence belongs to the class II fructose-bisphosphate aldolase family. TagBP aldolase GatY subfamily. Forms a complex with GatZ. The cofactor is Zn(2+).

It carries out the reaction D-tagatofuranose 1,6-bisphosphate = D-glyceraldehyde 3-phosphate + dihydroxyacetone phosphate. It functions in the pathway carbohydrate metabolism; D-tagatose 6-phosphate degradation; D-glyceraldehyde 3-phosphate and glycerone phosphate from D-tagatose 6-phosphate: step 2/2. Functionally, catalytic subunit of the tagatose-1,6-bisphosphate aldolase GatYZ, which catalyzes the reversible aldol condensation of dihydroxyacetone phosphate (DHAP or glycerone-phosphate) with glyceraldehyde 3-phosphate (G3P) to produce tagatose 1,6-bisphosphate (TBP). Requires GatZ subunit for full activity and stability. Is involved in the catabolism of galactitol. The chain is D-tagatose-1,6-bisphosphate aldolase subunit GatY from Klebsiella pneumoniae subsp. pneumoniae (strain ATCC 700721 / MGH 78578).